Consider the following 295-residue polypeptide: Ankyrin repeat and SOCS box protein 17 (295 aa).

One copy of the ANK repeat lies at 146–176 (SGITPLLYVAQTRQSNILKILLQYGILEREN). The SOCS box domain maps to 232 to 295 (LGRRPIISNW…CLQNYLNLES (64 aa)).

Belongs to the ankyrin SOCS box (ASB) family.

The protein operates within protein modification; protein ubiquitination. May be a substrate-recognition component of a SCF-like ECS (Elongin-Cullin-SOCS-box protein) E3 ubiquitin-protein ligase complex which mediates the ubiquitination and subsequent proteasomal degradation of target proteins. This Bos taurus (Bovine) protein is Ankyrin repeat and SOCS box protein 17 (ASB17).